Reading from the N-terminus, the 977-residue chain is SLIT and NTRK-like protein 3 (977 aa).

The signal sequence occupies residues 1-26; it reads MKPSIAEMLHRGRMLWIILLSTIALG. Topologically, residues 29–654 are extracellular; it reads TPIPLIEDSE…SPPGGPVPLS (626 aa). N-linked (GlcNAc...) asparagine glycosylation occurs at N68. LRR repeat units follow at residues 78-99, 102-123, 126-147, 150-171, 174-195, and 197-218; these read RPFK…SFLH, NAVS…AFNG, ILKR…TFLG, SLEY…AFRN, KLRV…LFKA, and SLTH…GMLD. Residues 232–283 enclose the LRRCT 1 domain; it reads NPWNCTCEIVQLKSWLERIPYTALVGDITCETPFHFHGKDLREIRKTELCPL. Residues 325–360 are disordered; that stretch reads EYKSSNKQPKPTKQPRTPRPPSTSQALYPGPNQPPI. The region spanning 364–406 is the LRRNT domain; sequence QTRPPIPIICPTGCTCNLHINDLGLTVNCKERGFNNISELLPR. LRR repeat units lie at residues 409-430, 433-454, 457-478, 481-502, 505-526, and 528-549; these read NAKK…DFWN, SLDL…AFIN, NLKS…MFRG, SLHY…AFSL, NLKL…AFAG, and SLAR…GVLE. An LRRCT 2 domain is found at 562–613; it reads NPWDCTCDLVPFKQWIETISSVSVVGDVLCRSPENLTHRDVRTIELEVLCPE. N-linked (GlcNAc...) asparagine glycosylation occurs at N596. Residues 655-675 form a helical membrane-spanning segment; sequence VLILSLLVLFFSAVFVAAGLF. The Cytoplasmic portion of the chain corresponds to 676 to 977; sequence AYVLRRRRKK…EVLEKTTYRF (302 aa). Disordered regions lie at residues 708 to 735 and 761 to 790; these read LFED…KAPP and EEEV…MGEA. Positions 711 to 724 are enriched in gly residues; it reads DGGGGGGGSGGGGR. The span at 765–775 shows a compositional bias: low complexity; sequence AVSSAQEAGSA.

Belongs to the SLITRK family. Expressed in the occipital lobe of the cerebral cortex of the brain. Expressed at higher levels in some astrocytic brain tumors such as astrocytomas, oligodendrogliomas, glioblastomas, gangliogliomas and primitive neuroectodermal tumors.

It localises to the membrane. In terms of biological role, suppresses neurite outgrowth. This chain is SLIT and NTRK-like protein 3 (SLITRK3), found in Homo sapiens (Human).